The following is a 452-amino-acid chain: Adenylosuccinate synthetase 2 (452 aa).

Residues 19 to 25 and 47 to 49 each bind GTP; these read GDEGKAR and GHT. Catalysis depends on Asp20, which acts as the Proton acceptor. Residues Asp20 and Gly47 each contribute to the Mg(2+) site. Residues 20–23, 45–48, Thr131, Arg145, Gln223, Thr238, and Arg338 each bind IMP; these read DEGK and NAGH. His48 functions as the Proton donor in the catalytic mechanism. 334-340 provides a ligand contact to substrate; it reads TGTGRPR. Residues Arg340, 366 to 368, and 437 to 439 contribute to the GTP site; these read KCD and GLG.

It belongs to the adenylosuccinate synthetase family. As to quaternary structure, homodimer. Mg(2+) is required as a cofactor.

It is found in the cytoplasm. The enzyme catalyses IMP + L-aspartate + GTP = N(6)-(1,2-dicarboxyethyl)-AMP + GDP + phosphate + 2 H(+). It participates in purine metabolism; AMP biosynthesis via de novo pathway; AMP from IMP: step 1/2. Plays an important role in the de novo pathway of purine nucleotide biosynthesis. Catalyzes the first committed step in the biosynthesis of AMP from IMP. The sequence is that of Adenylosuccinate synthetase 2 from Cupriavidus pinatubonensis (strain JMP 134 / LMG 1197) (Cupriavidus necator (strain JMP 134)).